The primary structure comprises 607 residues: Vacuolar fusion protein MON1 homolog (607 aa).

Low complexity predominate over residues 1–14; the sequence is MATSDSRSSPSSSD. 2 disordered regions span residues 1–173 and 463–486; these read MATS…DDAS and PIDR…DISV. Over residues 21-55 the composition is skewed to polar residues; sequence NPSSDPETNSERVQSQLESMNLSQPSEVSDGSHTE.

This sequence belongs to the MON1/SAND family. In terms of assembly, interacts with CCZ1A, CCZ1B and RABF2B. In terms of tissue distribution, widely expressed at stable levels.

It is found in the endosome. The protein resides in the prevacuolar compartment. Its function is as follows. Plays an important role in membrane trafficking through the secretory apparatus. In complex with CCZ1, acts as a guanine exchange factor (GEF) for RABG3F of the Rab7 protein family. Promotes the exchange of GDP to GTP, converting RABG3F from an inactive GDP-bound form into an active GTP-bound form. The RABG3F active form is involved in protein trafficking from prevacuolar compartments (PVCs) to vacuoles. May serve as a linker between Rab5 and Rab7 protein families in PVCs and mediate PVC maturation. The chain is Vacuolar fusion protein MON1 homolog from Arabidopsis thaliana (Mouse-ear cress).